The following is a 250-amino-acid chain: Ubiquinone/menaquinone biosynthesis C-methyltransferase UbiE (250 aa).

Residues serine 73, aspartate 94, and 122-123 (NA) each bind S-adenosyl-L-methionine.

It belongs to the class I-like SAM-binding methyltransferase superfamily. MenG/UbiE family.

The enzyme catalyses a 2-demethylmenaquinol + S-adenosyl-L-methionine = a menaquinol + S-adenosyl-L-homocysteine + H(+). It carries out the reaction a 2-methoxy-6-(all-trans-polyprenyl)benzene-1,4-diol + S-adenosyl-L-methionine = a 5-methoxy-2-methyl-3-(all-trans-polyprenyl)benzene-1,4-diol + S-adenosyl-L-homocysteine + H(+). The protein operates within quinol/quinone metabolism; menaquinone biosynthesis; menaquinol from 1,4-dihydroxy-2-naphthoate: step 2/2. Its pathway is cofactor biosynthesis; ubiquinone biosynthesis. Methyltransferase required for the conversion of demethylmenaquinol (DMKH2) to menaquinol (MKH2) and the conversion of 2-polyprenyl-6-methoxy-1,4-benzoquinol (DDMQH2) to 2-polyprenyl-3-methyl-6-methoxy-1,4-benzoquinol (DMQH2). The polypeptide is Ubiquinone/menaquinone biosynthesis C-methyltransferase UbiE (Legionella pneumophila (strain Paris)).